Here is a 253-residue protein sequence, read N- to C-terminus: Putative tyrosine-protein phosphatase OCA1 (253 aa).

A compositionally biased stretch (basic and acidic residues) spans 1-21 (MHRTSIVEELERHQQDQKADQ). The segment at 1-84 (MHRTSIVEEL…PRMKTIVKPP (84 aa)) is disordered. The span at 27 to 65 (SDASNSALQESSDPRLSTTDNTNTPEINVNDQQQEQQVA) shows a compositional bias: polar residues. The 157-residue stretch at 93–249 (NFGPVERNLY…IIVYPESAPE (157 aa)) folds into the Tyrosine-protein phosphatase domain. Cysteine 186 functions as the Phosphocysteine intermediate in the catalytic mechanism.

The protein belongs to the protein-tyrosine phosphatase family.

The protein localises to the cytoplasm. It carries out the reaction O-phospho-L-tyrosyl-[protein] + H2O = L-tyrosyl-[protein] + phosphate. In terms of biological role, putative tyrosine-protein phosphatase required for protection against superoxide stress. This Yarrowia lipolytica (strain CLIB 122 / E 150) (Yeast) protein is Putative tyrosine-protein phosphatase OCA1 (OCA1).